The sequence spans 262 residues: Kallikrein-1 (262 aa).

An N-terminal signal peptide occupies residues 1–18; it reads MWFLVLCLALSLGGTGAA. Residues 19–24 constitute a propeptide, activation peptide; that stretch reads PPIQSR. The Peptidase S1 domain occupies 25 to 259; sequence IVGGWECEQH…YVKWIEDTIA (235 aa). 5 disulfide bridges follow: C31–C174, C50–C66, C153–C220, C185–C199, and C210–C235. Catalysis depends on H65, which acts as the Charge relay system. An O-linked (GalNAc...) serine glycan is attached at S93. Residue N102 is glycosylated (N-linked (GlcNAc...) asparagine). O-linked (GalNAc...) serine glycosylation is present at S104. An N-linked (GlcNAc...) asparagine glycan is attached at N108. D120 functions as the Charge relay system in the catalytic mechanism. N165 is a glycosylation site (N-linked (GlcNAc...) asparagine; partial). S167 is a glycosylation site (O-linked (GalNAc...) serine). S214 (charge relay system) is an active-site residue.

The protein belongs to the peptidase S1 family. Kallikrein subfamily. In terms of processing, the O-linked polysaccharides on Ser-93, Ser-104 and Ser-167 are probably the mucin type linked to GalNAc. In PubMed:3163150, GalNAc was detected with the corresponding peptides but not located. Isoform 2 is expressed in pancreas, salivary glands, kidney, colon, prostate gland, testis, spleen and the colon adenocarcinoma cell line T84.

It carries out the reaction Preferential cleavage of Arg-|-Xaa bonds in small molecule substrates. Highly selective action to release kallidin (lysyl-bradykinin) from kininogen involves hydrolysis of Met-|-Xaa or Leu-|-Xaa.. In terms of biological role, glandular kallikreins cleave Met-Lys and Arg-Ser bonds in kininogen to release Lys-bradykinin. Its function is as follows. (Microbial infection) Cleaves Neisseria meningitidis NHBA in saliva; Neisseria is an obligate commensal of the nasopharyngeal mucosa. This chain is Kallikrein-1 (KLK1), found in Homo sapiens (Human).